We begin with the raw amino-acid sequence, 695 residues long: Potassium voltage-gated channel subfamily KQT member 4 (695 aa).

Residues 1–21 (MAEAPPRRLGLGPPPGDAPRA) are disordered. Residues 1–96 (MAEAPPRRLG…VYNVLERPRG (96 aa)) lie on the Cytoplasmic side of the membrane. A 1,2-diacyl-sn-glycero-3-phospho-(1D-myo-inositol-4,5-bisphosphate) is bound at residue Arg-93. A helical membrane pass occupies residues 97–118 (WAFVYHVFIFLLVFSCLVLSVL). Topologically, residues 119–129 (STIQEHQELAN) are extracellular. Residues 130–152 (ECLLILEFVMIVVFGLEYIVRVW) form a helical membrane-spanning segment. The Cytoplasmic portion of the chain corresponds to 153-168 (SAGCCCRYRGWQGRFR). A helical membrane pass occupies residues 169–191 (FARKPFCVIDFIVFVASVAVIAA). Lys-172 is an a 1,2-diacyl-sn-glycero-3-phospho-(1D-myo-inositol-4,5-bisphosphate) binding site. The Extracellular segment spans residues 192–202 (GTQGNIFATSA). Residues 203 to 223 (LRSMRFLQILRMVRMDRRGGT) form a helical; Voltage-sensor membrane-spanning segment. A 1,2-diacyl-sn-glycero-3-phospho-(1D-myo-inositol-4,5-bisphosphate) is bound by residues Arg-219, Arg-220, Lys-225, and Ser-235. At 224 to 235 (WKLLGSVVYAHS) the chain is on the cytoplasmic side. The helical transmembrane segment at 236–258 (KELITAWYIGFLVLIFASFLVYL) threads the bilayer. Residues 259–270 (AEKDANSDFSSY) lie on the Extracellular side of the membrane. Residues 271–292 (ADSLWWGTITLTTIGYGDKTPH) constitute an intramembrane region (pore-forming). Position 293 (Thr-293) is a topological domain, extracellular. The helical transmembrane segment at 294–322 (WLGRVLAAGFALLGISFFALPAGILGSGF) threads the bilayer. Topologically, residues 323 to 695 (ALKVQEQHRQ…ISRSVSTNMD (373 aa)) are cytoplasmic. Positions 330 and 333 each coordinate a 1,2-diacyl-sn-glycero-3-phospho-(1D-myo-inositol-4,5-bisphosphate). An interaction with CALM region spans residues 342–351 (AANLIQAAWR). Disordered regions lie at residues 400–480 (RRAP…TKVQ) and 496–515 (RLKPRTSAEDAPSEEVAEEK). Polar residues-rich tracts occupy residues 443–452 (GSSQRRTGPS) and 463–480 (TSPSSEQVGEATSPTKVQ). Positions 535-549 (RSIRILKFLVAKRKF) are interaction with CALM. The segment at 546–650 (KRKFKETLRP…SRCLRSGTSA (105 aa)) is C-terminal assembly domain (tetramerization). The disordered stretch occupies residues 587–606 (VGRGPGDRKAREKGDKGPSD). Positions 591–605 (PGDRKAREKGDKGPS) are enriched in basic and acidic residues. Residues 615–636 (MMGRVVKVEKQVQSIEHKLDLL) are a coiled coil.

It belongs to the potassium channel family. KQT (TC 1.A.1.15) subfamily. Kv7.4/KCNQ4 sub-subfamily. Homotetramer. Interacts (via C-terminus) with calmodulin; forms a heterooctameric structure (with 4:4 KCNQ1:CALM stoichiometry); the interaction is calcium-independent, constitutive, participates in the proper assembly of a functional channel. The interaction with calcium-free CALM controls channel trafficking whereas interaction with calcium-bound CALM regulates channel gating. May form a functional heteromultimeric channel with KCNQ3. Interacts with HSP90AB1; promotes cell surface expression of KCNQ4. In terms of tissue distribution, expressed in the outer, but not the inner, sensory hair cells of the cochlea. Slightly expressed in heart, brain and skeletal muscle.

The protein localises to the basal cell membrane. It carries out the reaction K(+)(in) = K(+)(out). Two molecules of phosphatidylinositol-4,5-bisphosphate (PIP2-I and PIP2-II) are essential to activate KCNQ4 channel by inducing the coupling of the voltage-sensing domain (VSD) and the pore-forming domain (PD). Upon channel activation, PIP2-I and PIP2-II disrupt the VSD-calmodulin/CALM interaction, causing the release of CALM from the VSD which triggers the opening of the gate. Calcium suppresses KCNQ4 channel current through calcium-bound CALM C-terminus. Therefore CALM acts as calcium sensor that controls channel activity. ML213 potentiates KCNQ4 channel. KCNQ4 channel is blocked by linopirdin, XE991 and bepridil, whereas clofilium is without significant effect. Muscarinic agonist oxotremorine-M strongly suppress KCNQ4 current in CHO cells in which cloned KCNQ4 channels were coexpressed with M1 muscarinic receptors. Pore-forming subunit of the voltage-gated potassium (Kv) channel involved in the regulation of sensory cells excitability in the cochlea. KCNQ4/Kv7.4 channel is composed of 4 pore-forming subunits assembled as tetramers. Promotes the outflow of potassium ions in the repolarization phase of action potential which plays a role in regulating membrane potential of excitable cells. The channel conducts a slowly activating and deactivating current. Current often shows some inward rectification at positive potentials. Channel may be selectively permeable in vitro to other cations besides potassium, in decreasing order of affinity K(+) = Rb(+) &gt; Cs(+) &gt; Na(+). Important for normal physiological function of inner ear such as sensory perception of sound. This is Potassium voltage-gated channel subfamily KQT member 4 from Homo sapiens (Human).